We begin with the raw amino-acid sequence, 741 residues long: Fibrinogen alpha chain (741 aa).

The N-terminal stretch at M1 to A18 is a signal peptide. Position 19 is a pyrrolidone carboxylic acid (Q19). Residues C67–D506 are a coiled coil. Residues V270–V307 form a disordered region. Over residues S277–S288 the composition is skewed to polar residues. A disulfide bond links C310 and C341. Composition is skewed to low complexity over residues S381 to G398 and S435 to S449. The tract at residues S381–I510 is disordered. Polar residues predominate over residues F450–T459. A Fibrinogen C-terminal domain is found at T498–E739. Positions 666, 668, 670, and 672 each coordinate Ca(2+). Residues C674 and C687 are joined by a disulfide bond.

As to quaternary structure, heterohexamer; disulfide linked. Contains 2 sets of 3 non-identical chains (alpha, beta and gamma). The 2 heterotrimers are in head to head conformation with the N-termini in a small central domain. In terms of processing, conversion of fibrinogen to fibrin is triggered by thrombin, which cleaves fibrinopeptides A and B from alpha and beta chains, and thus exposes the N-terminal polymerization sites responsible for the formation of the soft clot. The soft clot is converted into the hard clot by factor XIIIA which catalyzes the epsilon-(gamma-glutamyl)lysine cross-linking between gamma chains (stronger) and between alpha chains (weaker) of different monomers. Forms F13A-mediated cross-links between a glutamine and the epsilon-amino group of a lysine residue, forming fibronectin-fibrinogen heteropolymers.

It is found in the secreted. Its function is as follows. Cleaved by the protease thrombin to yield monomers which, together with fibrinogen beta (FGB) and fibrinogen gamma (FGG), polymerize to form an insoluble fibrin matrix. Fibrin has a major function in hemostasis as one of the primary components of blood clots. This chain is Fibrinogen alpha chain (FGA), found in Gallus gallus (Chicken).